Here is a 187-residue protein sequence, read N- to C-terminus: Putative lipoprotein LppJ (187 aa).

The N-terminal stretch at 1–28 is a signal peptide; sequence MPHSTADRRLRLTRQALLAAAVVPLLAG. Cys29 carries N-palmitoyl cysteine lipidation. Cys29 carries S-diacylglycerol cysteine lipidation.

It is found in the cell membrane. This is Putative lipoprotein LppJ (lppJ) from Mycobacterium tuberculosis (strain CDC 1551 / Oshkosh).